The chain runs to 100 residues: Aspartyl/glutamyl-tRNA(Asn/Gln) amidotransferase subunit C (100 aa).

This sequence belongs to the GatC family. Heterotrimer of A, B and C subunits.

The catalysed reaction is L-glutamyl-tRNA(Gln) + L-glutamine + ATP + H2O = L-glutaminyl-tRNA(Gln) + L-glutamate + ADP + phosphate + H(+). The enzyme catalyses L-aspartyl-tRNA(Asn) + L-glutamine + ATP + H2O = L-asparaginyl-tRNA(Asn) + L-glutamate + ADP + phosphate + 2 H(+). Allows the formation of correctly charged Asn-tRNA(Asn) or Gln-tRNA(Gln) through the transamidation of misacylated Asp-tRNA(Asn) or Glu-tRNA(Gln) in organisms which lack either or both of asparaginyl-tRNA or glutaminyl-tRNA synthetases. The reaction takes place in the presence of glutamine and ATP through an activated phospho-Asp-tRNA(Asn) or phospho-Glu-tRNA(Gln). This is Aspartyl/glutamyl-tRNA(Asn/Gln) amidotransferase subunit C from Streptococcus gordonii (strain Challis / ATCC 35105 / BCRC 15272 / CH1 / DL1 / V288).